The primary structure comprises 69 residues: ATP synthase protein 8 (69 aa).

A helical membrane pass occupies residues 8–24 (TWTLTISLMIISLFCIY). At Lys-55 the chain carries N6-acetyllysine; alternate. N6-succinyllysine; alternate is present on Lys-55. Lys-58 carries the post-translational modification N6-acetyllysine.

This sequence belongs to the ATPase protein 8 family. F-type ATPases have 2 components, CF(1) - the catalytic core - and CF(0) - the membrane proton channel. Component of an ATP synthase complex composed of ATP5PB, ATP5MC1, ATP5F1E, ATP5PD, ATP5ME, ATP5PF, ATP5MF, MT-ATP6, MT-ATP8, ATP5F1A, ATP5F1B, ATP5F1D, ATP5F1C, ATP5PO, ATP5MG, ATP5MK and ATP5MJ. Interacts with PRICKLE3.

The protein resides in the mitochondrion membrane. In terms of biological role, mitochondrial membrane ATP synthase (F(1)F(0) ATP synthase or Complex V) produces ATP from ADP in the presence of a proton gradient across the membrane which is generated by electron transport complexes of the respiratory chain. F-type ATPases consist of two structural domains, F(1) - containing the extramembraneous catalytic core and F(0) - containing the membrane proton channel, linked together by a central stalk and a peripheral stalk. During catalysis, ATP synthesis in the catalytic domain of F(1) is coupled via a rotary mechanism of the central stalk subunits to proton translocation. Part of the complex F(0) domain. Minor subunit located with subunit a in the membrane. The polypeptide is ATP synthase protein 8 (MT-ATP8) (Didelphis virginiana (North American opossum)).